A 775-amino-acid chain; its full sequence is Tyrosine-protein phosphatase non-receptor type 12 (775 aa).

Met-1 is modified (N-acetylmethionine). The residue at position 19 (Ser-19) is a Phosphoserine. Residues 28–293 (FARDFMRLRR…ELVHRAIAQL (266 aa)) enclose the Tyrosine-protein phosphatase domain. Substrate contacts are provided by residues Asp-199, 231-237 (CSAGCGR), and Gln-278. Catalysis depends on Cys-231, which acts as the Phosphocysteine intermediate. The segment at 322–341 (SSIDSEKQDSPPPKPPRTRS) is disordered. Residues Ser-331, Ser-434, Ser-448, and Ser-467 each carry the phosphoserine modification. Residues 344 to 437 (VEGDAKEEIL…KLERNLSFEI (94 aa)) are interaction with TGFB1I1. The disordered stretch occupies residues 462–775 (KIKSASSSVV…GPREPPSEWT (314 aa)). Phosphothreonine is present on Thr-519. Phosphoserine is present on residues Ser-550 and Ser-567. Residues 558-573 (NHSQTLKTVSSTPNST) show a composition bias toward polar residues. Thr-569 carries the phosphothreonine modification. The residue at position 596 (Ser-596) is a Phosphoserine. At Thr-598 the chain carries Phosphothreonine. Phosphoserine occurs at positions 603, 606, 608, and 613. Positions 622–640 (TSISTASATVSPASSAESA) are enriched in low complexity. The residue at position 673 (Ser-673) is a Phosphoserine. Residues 692 to 711 (VRPEWHELPNQEWSEQRESE) are compositionally biased toward basic and acidic residues. Ser-748 is modified (phosphoserine). Positions 766–775 (GPREPPSEWT) are enriched in basic and acidic residues.

This sequence belongs to the protein-tyrosine phosphatase family. Non-receptor class 4 subfamily. Interacts with PSTPIP1 and TGFB1I1. Interacts with PTK2B/PYK2. Interacts with LPXN. Interacts with SORBS2; this interaction greatly enhances WASF1 dephosphorylation and might mediate partial translocation to focal adhesion sites. Phosphorylated by STK24/MST3 and this results in inhibition of its activity.

It localises to the cytoplasm. The protein resides in the cell junction. Its subcellular location is the focal adhesion. The protein localises to the cell projection. It is found in the podosome. The enzyme catalyses O-phospho-L-tyrosyl-[protein] + H2O = L-tyrosyl-[protein] + phosphate. Functionally, dephosphorylates a range of proteins, and thereby regulates cellular signaling cascades. Dephosphorylates cellular tyrosine kinases, such as ERBB2 and PTK2B/PYK2, and thereby regulates signaling via ERBB2 and PTK2B/PYK2. Selectively dephosphorylates ERBB2 phosphorylated at 'Tyr-1112', 'Tyr-1196', and/or 'Tyr-1248'. This is Tyrosine-protein phosphatase non-receptor type 12 (Ptpn12) from Mus musculus (Mouse).